Consider the following 782-residue polypeptide: Translation initiation factor IF-2 (782 aa).

The span at 1–14 shows a compositional bias: basic and acidic residues; the sequence is MSKNIDDKNEDGKK. 2 disordered regions span residues 1 to 106 and 132 to 174; these read MSKN…KKTY and SIVS…AETE. Over residues 15–25 the composition is skewed to basic residues; the sequence is IKIIKLRKKVV. Positions 31–43 are enriched in polar residues; it reads NDLSGKNNPSGST. Residues 44 to 61 are compositionally biased toward basic and acidic residues; it reads DLHKHNNKVEYSHSRDGR. Composition is skewed to polar residues over residues 86–106 and 133–142; these read GYSQ…KKTY and IVSSASSTDS. Positions 143-159 are enriched in basic and acidic residues; that stretch reads ENSKELNRKLGEKKKQQ. Positions 280–453 constitute a tr-type G domain; the sequence is EKPPVITIMG…DMMLLKANPS (174 aa). The tract at residues 289–296 is G1; that stretch reads GHVDHGKT. 289–296 is a binding site for GTP; the sequence is GHVDHGKT. Residues 314–318 form a G2 region; the sequence is GITQH. Positions 335-338 are G3; that stretch reads DTPG. Residues 335–339 and 389–392 contribute to the GTP site; these read DTPGH and NKID. Residues 389-392 form a G4 region; sequence NKID. Positions 425–427 are G5; that stretch reads SAL.

This sequence belongs to the TRAFAC class translation factor GTPase superfamily. Classic translation factor GTPase family. IF-2 subfamily.

It localises to the cytoplasm. One of the essential components for the initiation of protein synthesis. Protects formylmethionyl-tRNA from spontaneous hydrolysis and promotes its binding to the 30S ribosomal subunits. Also involved in the hydrolysis of GTP during the formation of the 70S ribosomal complex. The protein is Translation initiation factor IF-2 of Borreliella afzelii (strain PKo) (Borrelia afzelii).